The chain runs to 449 residues: Tubulin alpha chain (449 aa).

The short motif at 1–4 is the MREC motif element; that stretch reads MREC. Position 11 (glutamine 11) interacts with GTP. N6-acetyllysine is present on lysine 40. GTP contacts are provided by glutamate 71, serine 140, glycine 144, threonine 145, threonine 179, asparagine 206, and asparagine 228. Position 71 (glutamate 71) interacts with Mg(2+). The active site involves glutamate 254. The segment at 430 to 449 is disordered; that stretch reads KDYEEVGADSADAEDEGEEY. Residues 431–449 are compositionally biased toward acidic residues; sequence DYEEVGADSADAEDEGEEY.

Belongs to the tubulin family. In terms of assembly, dimer of alpha and beta chains. A typical microtubule is a hollow water-filled tube with an outer diameter of 25 nm and an inner diameter of 15 nM. Alpha-beta heterodimers associate head-to-tail to form protofilaments running lengthwise along the microtubule wall with the beta-tubulin subunit facing the microtubule plus end conferring a structural polarity. Microtubules usually have 13 protofilaments but different protofilament numbers can be found in some organisms and specialized cells. Mg(2+) serves as cofactor. Post-translationally, some glutamate residues at the C-terminus are polyglycylated, resulting in polyglycine chains on the gamma-carboxyl group. Glycylation is mainly limited to tubulin incorporated into axonemes (cilia and flagella) whereas glutamylation is prevalent in neuronal cells, centrioles, axonemes, and the mitotic spindle. Both modifications can coexist on the same protein on adjacent residues, and lowering polyglycylation levels increases polyglutamylation, and reciprocally. The precise function of polyglycylation is still unclear. Some glutamate residues at the C-terminus are polyglutamylated, resulting in polyglutamate chains on the gamma-carboxyl group. Polyglutamylation plays a key role in microtubule severing by spastin (SPAST). SPAST preferentially recognizes and acts on microtubules decorated with short polyglutamate tails: severing activity by SPAST increases as the number of glutamates per tubulin rises from one to eight, but decreases beyond this glutamylation threshold. In terms of processing, acetylation of alpha chains at Lys-40 is located inside the microtubule lumen. This modification has been correlated with increased microtubule stability, intracellular transport and ciliary assembly. Post-translationally, undergoes a tyrosination/detyrosination cycle, the cyclic removal and re-addition of a C-terminal tyrosine residue by the enzymes tubulin tyrosine carboxypeptidase (MATCAP1, VASH1 or VASH2) and tubulin tyrosine ligase (TTL), respectively. Tyrosination promotes microtubule interaction with CAP-Gly microtubule plus-end tracking proteins. Tyrosinated tubulins regulate the initiation of dynein-driven motility. In terms of processing, detyrosination is involved in metaphase plate congression by guiding chromosomes during mitosis. Detyrosination increases microtubules-dependent mechanotransduction in dystrophic cardiac and skeletal muscle. In cardiomyocytes, detyrosinated microtubules are required to resist to contractile compression during contraction.

It localises to the cytoplasm. It is found in the cytoskeleton. It catalyses the reaction GTP + H2O = GDP + phosphate + H(+). Tubulin is the major constituent of microtubules, a cylinder consisting of laterally associated linear protofilaments composed of alpha- and beta-tubulin heterodimers. Microtubules grow by the addition of GTP-tubulin dimers to the microtubule end, where a stabilizing cap forms. Below the cap, tubulin dimers are in GDP-bound state, owing to GTPase activity of alpha-tubulin. The sequence is that of Tubulin alpha chain (tuba) from Xenopus laevis (African clawed frog).